The following is a 796-amino-acid chain: Probable phosphoketolase (796 aa).

The protein belongs to the XFP family. It depends on thiamine diphosphate as a cofactor.

This Clostridium acetobutylicum (strain ATCC 824 / DSM 792 / JCM 1419 / IAM 19013 / LMG 5710 / NBRC 13948 / NRRL B-527 / VKM B-1787 / 2291 / W) protein is Probable phosphoketolase.